Consider the following 157-residue polypeptide: uncharacterized protein (157 aa).

The N-acetyltransferase domain maps to 9 to 154; the sequence is LLINYKTLDE…ETNLNAVTNE (146 aa).

This is an uncharacterized protein from Bacillus cereus (strain B4264).